A 133-amino-acid chain; its full sequence is Small ribosomal subunit protein uS8 (133 aa).

It belongs to the universal ribosomal protein uS8 family. Part of the 30S ribosomal subunit. Contacts proteins S5 and S12.

In terms of biological role, one of the primary rRNA binding proteins, it binds directly to 16S rRNA central domain where it helps coordinate assembly of the platform of the 30S subunit. This chain is Small ribosomal subunit protein uS8, found in Crocosphaera subtropica (strain ATCC 51142 / BH68) (Cyanothece sp. (strain ATCC 51142)).